Consider the following 549-residue polypeptide: Membrane protein insertase YidC (549 aa).

A helical transmembrane segment spans residues 9–29 (LRLILAIALSFLFIALYSYFF). Positions 37–51 (TETTKQETTNNHTAT) are enriched in low complexity. Residues 37-56 (TETTKQETTNNHTATSPTAS) form a disordered region. A run of 5 helical transmembrane segments spans residues 328-348 (VIEY…LDYL), 351-371 (FVGN…IILY), 417-437 (GANP…FFAI), 452-472 (WVLW…PLLM), and 498-518 (LLPL…VLYW).

Belongs to the OXA1/ALB3/YidC family. Type 1 subfamily. In terms of assembly, interacts with the Sec translocase complex via SecD. Specifically interacts with transmembrane segments of nascent integral membrane proteins during membrane integration.

Its subcellular location is the cell inner membrane. Its function is as follows. Required for the insertion and/or proper folding and/or complex formation of integral membrane proteins into the membrane. Involved in integration of membrane proteins that insert both dependently and independently of the Sec translocase complex, as well as at least some lipoproteins. Aids folding of multispanning membrane proteins. The polypeptide is Membrane protein insertase YidC (Helicobacter pylori (strain J99 / ATCC 700824) (Campylobacter pylori J99)).